The following is a 272-amino-acid chain: Dermonecrotic toxin LvSicTox-alphaIC1biii (272 aa).

Residue H5 is part of the active site. Mg(2+) is bound by residues E25 and D27. The Nucleophile role is filled by H41. 2 disulfide bridges follow: C45/C51 and C47/C189. D84 is a Mg(2+) binding site.

Belongs to the arthropod phospholipase D family. Class II subfamily. Mg(2+) serves as cofactor. As to expression, expressed by the venom gland.

It is found in the secreted. It catalyses the reaction an N-(acyl)-sphingosylphosphocholine = an N-(acyl)-sphingosyl-1,3-cyclic phosphate + choline. The catalysed reaction is an N-(acyl)-sphingosylphosphoethanolamine = an N-(acyl)-sphingosyl-1,3-cyclic phosphate + ethanolamine. It carries out the reaction a 1-acyl-sn-glycero-3-phosphocholine = a 1-acyl-sn-glycero-2,3-cyclic phosphate + choline. The enzyme catalyses a 1-acyl-sn-glycero-3-phosphoethanolamine = a 1-acyl-sn-glycero-2,3-cyclic phosphate + ethanolamine. Its function is as follows. Dermonecrotic toxins cleave the phosphodiester linkage between the phosphate and headgroup of certain phospholipids (sphingolipid and lysolipid substrates), forming an alcohol (often choline) and a cyclic phosphate. This toxin acts on sphingomyelin (SM). It may also act on ceramide phosphoethanolamine (CPE), lysophosphatidylcholine (LPC) and lysophosphatidylethanolamine (LPE), but not on lysophosphatidylserine (LPS), and lysophosphatidylglycerol (LPG). It acts by transphosphatidylation, releasing exclusively cyclic phosphate products as second products. Induces dermonecrosis, hemolysis, increased vascular permeability, edema, inflammatory response, and platelet aggregation. The chain is Dermonecrotic toxin LvSicTox-alphaIC1biii from Loxosceles variegata (Recluse spider).